The primary structure comprises 138 residues: Large ribosomal subunit protein uL16c (138 aa).

Belongs to the universal ribosomal protein uL16 family. As to quaternary structure, part of the 50S ribosomal subunit.

Its subcellular location is the plastid. The protein localises to the chloroplast. The chain is Large ribosomal subunit protein uL16c from Tetradesmus obliquus (Green alga).